The sequence spans 304 residues: MAGKSKNHIYAGFTSGLVSAVVLQPFDLLKTRVQQSNGKSMVQVIKSLNTPLDLWRGTLPSALRMSVGSAMYFTCLNTVREAVAGGRRLTVGDRSTSSLPKLTNTENLISGGLVRGTVGLLVMPITVIKVRYESSTYHYKSIVDAATSIYKHNGMRGFFYGWAATFARDAPYAGLYMLFYEQLKVALPSILFSDITTSSHSEKYYSSWSSAMINSVAAATSAGIATTCTNPFDTVKTRMQLAPKEYPNFLTSVKTIIQHEGIQALFRGLALRICRKACQAGISWCIYEDLVKRFERMNLPGPQL.

Solcar repeat units lie at residues 3–82 (GKSK…VREA), 106–186 (ENLI…LKVA), and 209–293 (SSAM…LVKR). The next 6 membrane-spanning stretches (helical) occupy residues 9-34 (IYAGFTSGLVSAVVLQPFDLLKTRVQ), 57-83 (GTLPSALRMSVGSAMYFTCLNTVREAV), 108-133 (LISGGLVRGTVGLLVMPITVIKVRYE), 161-184 (GWAATFARDAPYAGLYMLFYEQLK), 213-239 (INSVAAATSAGIATTCTNPFDTVKTRM), and 268-286 (GLALRICRKACQAGISWCI).

The protein belongs to the mitochondrial carrier (TC 2.A.29) family. SLC25A38 subfamily.

The protein resides in the mitochondrion inner membrane. It carries out the reaction glycine(in) = glycine(out). Functionally, mitochondrial glycine transporter that imports glycine into the mitochondrial matrix. Plays an important role in providing glycine for the first enzymatic step in heme biosynthesis, the condensation of glycine with succinyl-CoA to produce 5-aminolevulinate (ALA) in the mitochondrial matrix. The protein is Mitochondrial glycine transporter of Yarrowia lipolytica (strain CLIB 122 / E 150) (Yeast).